Reading from the N-terminus, the 297-residue chain is Small ribosomal subunit biogenesis GTPase RsgA (297 aa).

Residues 65-223 (INEIGRPAVA…IADTPGFSAI (159 aa)) form the CP-type G domain. Residues 114-117 (SKSD) and 166-174 (GQSGAGKST) contribute to the GTP site. Zn(2+)-binding residues include Cys247, Cys252, His254, and Cys260.

This sequence belongs to the TRAFAC class YlqF/YawG GTPase family. RsgA subfamily. As to quaternary structure, monomer. Associates with 30S ribosomal subunit, binds 16S rRNA. It depends on Zn(2+) as a cofactor.

It is found in the cytoplasm. Functionally, one of several proteins that assist in the late maturation steps of the functional core of the 30S ribosomal subunit. Helps release RbfA from mature subunits. May play a role in the assembly of ribosomal proteins into the subunit. Circularly permuted GTPase that catalyzes slow GTP hydrolysis, GTPase activity is stimulated by the 30S ribosomal subunit. In Lactobacillus johnsonii (strain CNCM I-12250 / La1 / NCC 533), this protein is Small ribosomal subunit biogenesis GTPase RsgA.